The primary structure comprises 303 residues: MDAKIKRAEGRLREDPYEGHQMLRTLVNRQVKAKKHDDAVALLYSGAKTLFEIEQTGSAADLAIYMLDVYEKASYAASLDNKARALTLLGLFPAEEGARKQYVKRLLEWSKSAGPQGDKDVHFAVATMFVKWKEPASAEKHFVLGNEKSARAYGETMYYWFTSDSSISPDTFAGRPVLNYLLAENLISAWNSLETFTKHFTKSNAPDVENMSFDGKDFPVFKEYPQMNFLHLLIFTAYRKDKETYLSLVQKYPKKQDWEAALAKIEEIYFGIRPVSNQPNILANLMSSLFSGPPAATNQLDLE.

It belongs to the GET4 family.

It localises to the cytoplasm. Functionally, may play a role in insertion of tail-anchored proteins into the endoplasmic reticulum membrane. This chain is Golgi to ER traffic protein 4 (get4), found in Schizosaccharomyces pombe (strain 972 / ATCC 24843) (Fission yeast).